Reading from the N-terminus, the 671-residue chain is Peroxisomal membrane protein PEX17 (671 aa).

8 helical membrane-spanning segments follow: residues 127–147, 187–207, 212–232, 258–278, 318–338, 372–392, 475–495, and 504–524; these read LPLL…GPTL, VPVL…DVAI, FLQV…GTAL, VVAL…HVDI, YLKW…NMLL, FAAY…EYAP, LVEA…NAVV, and MGGV…VLAI.

It is found in the peroxisome membrane. Involved in peroxisome biosynthesis. Required for the import of a subset of matrix proteins into peroxisomes. This Yarrowia lipolytica (strain CLIB 122 / E 150) (Yeast) protein is Peroxisomal membrane protein PEX17 (PEX17).